The chain runs to 275 residues: Axin interactor, dorsalization-associated protein (275 aa).

Residues 97 to 107 (NLEFEEDEEEG) show a composition bias toward acidic residues. The disordered stretch occupies residues 97 to 125 (NLEFEEDEEEGGAGAGSPDSFPARVPGTL). Serine 113 bears the Phosphoserine mark. An axin-binding region spans residues 123 to 190 (GTLLPRLPSE…RKEDTYVHFN (68 aa)). Residues 126-273 (LPRLPSEPGM…LYLHLHQTLH (148 aa)) enclose the C2 Aida-type domain.

Belongs to the AIDA family. Interacts with AXIN1.

Functionally, acts as a ventralizing factor during embryogenesis. Inhibits axin-mediated JNK activation by binding axin and disrupting axin homodimerization. This in turn antagonizes a Wnt/beta-catenin-independent dorsalization pathway activated by AXIN/JNK-signaling. This Macaca fascicularis (Crab-eating macaque) protein is Axin interactor, dorsalization-associated protein (AIDA).